Consider the following 859-residue polypeptide: Rod cGMP-specific 3',5'-cyclic phosphodiesterase subunit alpha (859 aa).

At glycine 2 the chain carries N-acetylglycine. 2 consecutive GAF domains span residues 73–222 (QAEK…NLIM) and 254–431 (DIER…GWSV). The PDEase domain maps to 483–816 (EEEELAEILQ…KEWKALADEY (334 aa)). The active-site Proton donor is the histidine 559. The a divalent metal cation site is built by histidine 563, histidine 599, aspartate 600, and aspartate 720. Residues 823-859 (LEEEKQKQQAAKQAASGNQPGGNPLQGAPASKSCCIQ) form a disordered region. A Cysteine methyl ester modification is found at cysteine 856. Cysteine 856 is lipidated: S-farnesyl cysteine. Residues 857-859 (CIQ) constitute a propeptide, removed in mature form.

This sequence belongs to the cyclic nucleotide phosphodiesterase family. In terms of assembly, oligomer composed of two catalytic chains (alpha and beta), an inhibitory chain (gamma) and the delta chain. A divalent metal cation is required as a cofactor.

The protein resides in the cell membrane. Its subcellular location is the cell projection. It is found in the cilium. It localises to the photoreceptor outer segment. The enzyme catalyses 3',5'-cyclic GMP + H2O = GMP + H(+). Functionally, rod-specific cGMP phosphodiesterase that catalyzes the hydrolysis of 3',5'-cyclic GMP. This protein participates in processes of transmission and amplification of the visual signal. The polypeptide is Rod cGMP-specific 3',5'-cyclic phosphodiesterase subunit alpha (Mus musculus (Mouse)).